The primary structure comprises 831 residues: Periplasmic nitrate reductase (831 aa).

A signal peptide (tat-type signal) is located at residues 1–29 (MTLTRRDLIKAQAAATAAAAAGLPVSALA). Residues 41 to 97 (IRWSKAPCRFCGTGCGVMVGTRDGQVVATHGDTQAEVNRGLNCVKGYFLSKIMYGED) enclose the 4Fe-4S Mo/W bis-MGD-type domain. Positions 48, 51, 55, and 83 each coordinate [4Fe-4S] cluster. Residues Lys-85, Gln-152, Asn-177, Cys-181, 214-221 (WGSNMAEM), 245-249 (STFTH), 264-266 (GTD), Met-375, Gln-379, Asn-485, 511-512 (SD), Lys-534, Asp-561, and 721-730 (TGRVLEHWHS) contribute to the Mo-bis(molybdopterin guanine dinucleotide) site. Trp-797 provides a ligand contact to substrate. The Mo-bis(molybdopterin guanine dinucleotide) site is built by Asn-805 and Lys-822.

It belongs to the prokaryotic molybdopterin-containing oxidoreductase family. NasA/NapA/NarB subfamily. As to quaternary structure, component of the periplasmic nitrate reductase NapAB complex composed of NapA and NapB. [4Fe-4S] cluster is required as a cofactor. Requires Mo-bis(molybdopterin guanine dinucleotide) as cofactor. In terms of processing, predicted to be exported by the Tat system. The position of the signal peptide cleavage has not been experimentally proven.

It localises to the periplasm. The enzyme catalyses 2 Fe(II)-[cytochrome] + nitrate + 2 H(+) = 2 Fe(III)-[cytochrome] + nitrite + H2O. Functionally, catalytic subunit of the periplasmic nitrate reductase complex NapAB. Receives electrons from NapB and catalyzes the reduction of nitrate to nitrite. This Cereibacter sphaeroides (strain ATCC 17023 / DSM 158 / JCM 6121 / CCUG 31486 / LMG 2827 / NBRC 12203 / NCIMB 8253 / ATH 2.4.1.) (Rhodobacter sphaeroides) protein is Periplasmic nitrate reductase.